The following is a 118-amino-acid chain: Small ribosomal subunit protein uS13 (118 aa).

Residues 93–118 (RSLPVRGQRSKTNARTRKGPRKPIKK) form a disordered region.

Belongs to the universal ribosomal protein uS13 family. Part of the 30S ribosomal subunit. Forms a loose heterodimer with protein S19. Forms two bridges to the 50S subunit in the 70S ribosome.

Its function is as follows. Located at the top of the head of the 30S subunit, it contacts several helices of the 16S rRNA. In the 70S ribosome it contacts the 23S rRNA (bridge B1a) and protein L5 of the 50S subunit (bridge B1b), connecting the 2 subunits; these bridges are implicated in subunit movement. Contacts the tRNAs in the A and P-sites. This chain is Small ribosomal subunit protein uS13, found in Teredinibacter turnerae (strain ATCC 39867 / T7901).